The following is a 188-amino-acid chain: MLKRVAIVLGGLLISAHALANTMVEMKTNLGNIEIELYNNKAPISAKNFESYVKNNFYNGTIFHRVIPNFMIQGGGFETNMKEKATAAPIKNEASNGLANTRGTLAMARTSNPDSATSQFFINVADNNFLNASRTDAGYAVFGKVIKGMDVVDKIANVPTSTYGMHQNVPKQPVKIISVQIKSINTAK.

Positions 1 to 20 are cleaved as a signal peptide; sequence MLKRVAIVLGGLLISAHALA. The region spanning 21-181 is the PPIase cyclophilin-type domain; the sequence is NTMVEMKTNL…QPVKIISVQI (161 aa).

This sequence belongs to the cyclophilin-type PPIase family.

The protein localises to the periplasm. The catalysed reaction is [protein]-peptidylproline (omega=180) = [protein]-peptidylproline (omega=0). PPIases accelerate the folding of proteins. It catalyzes the cis-trans isomerization of proline imidic peptide bonds in oligopeptides. This protein is not essential for growth. Presumably plays a role in signal transduction. The chain is Peptidyl-prolyl cis-trans isomerase (rotA) from Acinetobacter baylyi (strain ATCC 33305 / BD413 / ADP1).